A 255-amino-acid chain; its full sequence is 5'-nucleotidase SurE (255 aa).

A divalent metal cation is bound by residues Asp8, Asp9, Ser40, and Asn92.

This sequence belongs to the SurE nucleotidase family. Requires a divalent metal cation as cofactor.

It is found in the cytoplasm. It catalyses the reaction a ribonucleoside 5'-phosphate + H2O = a ribonucleoside + phosphate. Functionally, nucleotidase that shows phosphatase activity on nucleoside 5'-monophosphates. The protein is 5'-nucleotidase SurE of Brucella abortus (strain S19).